Reading from the N-terminus, the 212-residue chain is Casparian strip membrane protein 1 (212 aa).

Residues 1–28 are disordered; sequence MDSSNSTKETGDIPIPVTSSKSSKAAPP. The Cytoplasmic portion of the chain corresponds to 1-49; sequence MDSSNSTKETGDIPIPVTSSKSSKAAPPPVVAAKAKSTTKQPLVSGWKR. Low complexity predominate over residues 16-28; it reads PVTSSKSSKAAPP. A helical membrane pass occupies residues 50–70; the sequence is GLGIIDFILRICAIAAALAAA. The Extracellular segment spans residues 71–100; it reads TAMGTTSQQLPFFTQFFQFKADYNDLPAFT. A helical transmembrane segment spans residues 101–121; that stretch reads FFVIANAMAGAYLVLSLPFSI. Topologically, residues 122 to 133 are cytoplasmic; that stretch reads LCIVRPHILGAR. A helical membrane pass occupies residues 134–154; it reads LMLLVFDTVAVPLVTAAASAA. Residues 155–186 lie on the Extracellular side of the membrane; that stretch reads ASIVYLAHNGNSDANWVAICRQFNDFCQRVSG. Residues 187–207 form a helical membrane-spanning segment; the sequence is AVVASFITALLFVVLVAVSAV. Over 208 to 212 the chain is Cytoplasmic; sequence ALRQK.

Belongs to the Casparian strip membrane proteins (CASP) family. In terms of assembly, homodimer and heterodimers.

The protein localises to the cell membrane. Its function is as follows. Regulates membrane-cell wall junctions and localized cell wall deposition. Required for establishment of the Casparian strip membrane domain (CSD) and the subsequent formation of Casparian strips, a cell wall modification of the root endodermis that determines an apoplastic barrier between the intraorganismal apoplasm and the extraorganismal apoplasm and prevents lateral diffusion. In Helianthus annuus (Common sunflower), this protein is Casparian strip membrane protein 1.